We begin with the raw amino-acid sequence, 236 residues long: Transcriptional activator protein SolR (236 aa).

Positions 169-234 constitute an HTH luxR-type domain; the sequence is VPESSAALTA…QAVVKAIAIG (66 aa). A DNA-binding region (H-T-H motif) is located at residues 193 to 212; the sequence is AYEIGQILRISERTVNFHVN.

This sequence belongs to the autoinducer-regulated transcriptional regulatory protein family.

The polypeptide is Transcriptional activator protein SolR (solR) (Ralstonia nicotianae (strain ATCC BAA-1114 / GMI1000) (Ralstonia solanacearum)).